The primary structure comprises 96 residues: Co-chaperonin GroES (96 aa).

It belongs to the GroES chaperonin family. Heptamer of 7 subunits arranged in a ring. Interacts with the chaperonin GroEL.

It is found in the cytoplasm. Functionally, together with the chaperonin GroEL, plays an essential role in assisting protein folding. The GroEL-GroES system forms a nano-cage that allows encapsulation of the non-native substrate proteins and provides a physical environment optimized to promote and accelerate protein folding. GroES binds to the apical surface of the GroEL ring, thereby capping the opening of the GroEL channel. The sequence is that of Co-chaperonin GroES from Shewanella halifaxensis (strain HAW-EB4).